Here is a 302-residue protein sequence, read N- to C-terminus: Sulfotransferase 1C4 (302 aa).

A 3'-phosphoadenylyl sulfate-binding site is contributed by 55 to 60; that stretch reads KAGTTW. 113–115 serves as a coordination point for substrate; it reads KTH. Residue H115 is the Proton acceptor of the active site. 3'-phosphoadenylyl sulfate contacts are provided by residues R137, S145, Y200, 234–239, and 262–266; these read TSFDVM and FMRKG.

The protein belongs to the sulfotransferase 1 family. As to expression, expressed in liver, kidney and jejunum.

Its subcellular location is the cytoplasm. The protein localises to the cytosol. It catalyses the reaction a phenol + 3'-phosphoadenylyl sulfate = an aryl sulfate + adenosine 3',5'-bisphosphate + H(+). The enzyme catalyses 17beta-estradiol + 3'-phosphoadenylyl sulfate = 17beta-estradiol 3-sulfate + adenosine 3',5'-bisphosphate + H(+). It carries out the reaction bisphenol A + 3'-phosphoadenylyl sulfate = bisphenyl A sulfate + adenosine 3',5'-bisphosphate + H(+). In terms of biological role, sulfotransferase that utilizes 3'-phospho-5'-adenylyl sulfate (PAPS) as sulfonate donor to catalyze the sulfate conjugation of phenolic compounds and estrogen (E2). Can also sulfonate estrogenic compounds, however, the dietary flavonoids (phytoestrogen) and environmental estrogens, like bisphenol A are better substrates than 17beta-estradiol (E2). This chain is Sulfotransferase 1C4 (SULT1C4), found in Macaca fascicularis (Crab-eating macaque).